Here is a 605-residue protein sequence, read N- to C-terminus: Aspartate--tRNA(Asp/Asn) ligase (605 aa).

E183 contacts L-aspartate. The segment at 207–210 (QLFK) is aspartate. R229 is a binding site for L-aspartate. ATP contacts are provided by residues 229–231 (RDE) and Q238. H457 provides a ligand contact to L-aspartate. Residue E497 coordinates ATP. Residue R504 participates in L-aspartate binding. 549 to 552 (GLDR) serves as a coordination point for ATP.

Belongs to the class-II aminoacyl-tRNA synthetase family. Type 1 subfamily. As to quaternary structure, homodimer.

The protein resides in the cytoplasm. The catalysed reaction is tRNA(Asx) + L-aspartate + ATP = L-aspartyl-tRNA(Asx) + AMP + diphosphate. Aspartyl-tRNA synthetase with relaxed tRNA specificity since it is able to aspartylate not only its cognate tRNA(Asp) but also tRNA(Asn). Reaction proceeds in two steps: L-aspartate is first activated by ATP to form Asp-AMP and then transferred to the acceptor end of tRNA(Asp/Asn). This chain is Aspartate--tRNA(Asp/Asn) ligase, found in Persephonella marina (strain DSM 14350 / EX-H1).